The chain runs to 517 residues: Pentatricopeptide repeat-containing protein At5g42450, mitochondrial (517 aa).

The transit peptide at 1-23 directs the protein to the mitochondrion; it reads MLHMILSQRVILLRKYHSSANAL. 9 PPR repeats span residues 57 to 91, 92 to 126, 127 to 157, 158 to 188, 189 to 223, 225 to 259, 261 to 291, 294 to 329, and 368 to 398; these read DVISATAVIGRFVKESRHVEASQAFKRLLCLGIRP, NEFTFGTVIGSSTTSRDVKLGKQLHCYALKMGLAS, NVFVGSAVLNCYVKLSTLTDARRCFDDTRDP, NVVSITNLISGYLKKHEFEEALSLFRAMPER, SVVTWNAVIGGFSQTGRNEEAVNTFVDMLREGVVI, NESTFPCAITAISNIASHGAGKSIHACAIKFLGKR, NVFVWNSLISFYSKCGNMEDSLLAFNKLEEE, NIVSWNSMIWGYAHNGRGEEAVAMFEKMVKDTNLRP, and ELEHYACMVDMLSRSGRFKEAEELIKSMPLD. The interval 403-478 is type E motif; that stretch reads FWKALLGGCQ…FTGCSWIEVR (76 aa). The tract at residues 479–509 is type E(+) motif; it reads DQIRVFVNADKNNELKDEVYRMLALVSQHLE.

It belongs to the PPR family. PCMP-E subfamily.

The protein resides in the mitochondrion. This Arabidopsis thaliana (Mouse-ear cress) protein is Pentatricopeptide repeat-containing protein At5g42450, mitochondrial (PCMP-E102).